We begin with the raw amino-acid sequence, 140 residues long: DegV domain-containing 15.5 kDa protein (140 aa).

The region spanning 4-140 (QIIVTDSTSD…ELVLLQSKKI (137 aa)) is the DegV domain. Threonine 61 and serine 93 together coordinate hexadecanoate.

Functionally, may bind long-chain fatty acids, such as palmitate, and may play a role in lipid transport or fatty acid metabolism. The chain is DegV domain-containing 15.5 kDa protein from Staphylococcus aureus.